A 299-amino-acid chain; its full sequence is Urease accessory protein UreD (299 aa).

Belongs to the UreD family. In terms of assembly, ureD, UreF and UreG form a complex that acts as a GTP-hydrolysis-dependent molecular chaperone, activating the urease apoprotein by helping to assemble the nickel containing metallocenter of UreC. The UreE protein probably delivers the nickel.

The protein resides in the cytoplasm. Functionally, required for maturation of urease via the functional incorporation of the urease nickel metallocenter. The sequence is that of Urease accessory protein UreD from Haloarcula marismortui (strain ATCC 43049 / DSM 3752 / JCM 8966 / VKM B-1809) (Halobacterium marismortui).